The sequence spans 715 residues: Gelsolin, cytoplasmic (715 aa).

The interval 1-124 is actin-severing; that stretch reads MTTELEIQKA…YLIGGVASGF (124 aa). The stretch at 24–75 is one Gelsolin-like 1 repeat; it reads FELVPVPKTNHGKFYTGDSYIILKTTALESGRGFEWNLHYWQGKESSQDERG. The actin-actin interfilament contact point stretch occupies residues 72–75; sequence DERG. Residue 136 to 145 participates in a 1,2-diacyl-sn-glycero-3-phospho-(1D-myo-inositol-4,5-bisphosphate) binding; it reads KVLTRVKGKR. 3 Gelsolin-like repeats span residues 147–187, 260–306, and 405–451; these read VRAT…FEKN, LKIT…TERA, and LRKE…NERT. The segment at 384-715 is actin-binding, Ca-sensitive; sequence AAESKMIDDG…FLGWDKTLWD (332 aa). Ca(2+)-binding residues include glycine 421, aspartate 422, glutamate 449, threonine 499, asparagine 539, aspartate 540, glutamate 562, aspartate 642, and glutamate 665. Gelsolin-like repeat units follow at residues 524-564 and 625-667; these read CRAV…SEIQ and FIAE…EEKM.

This sequence belongs to the villin/gelsolin family. As to expression, predominantly in the body wall muscle, but expression is not restricted to muscle cells.

It is found in the cytoplasm. The protein localises to the cytoskeleton. Its function is as follows. Calcium-regulated, actin-modulating protein that binds to the plus (or barbed) ends of actin monomers or filaments, preventing monomer exchange (end-blocking or capping). It can promote the assembly of monomers into filaments (nucleation) as well as sever filaments already formed. The protein is Gelsolin, cytoplasmic of Halocynthia roretzi (Sea squirt).